The chain runs to 56 residues: Large ribosomal subunit protein bL32 (56 aa).

It belongs to the bacterial ribosomal protein bL32 family.

This Synechococcus sp. (strain CC9311) protein is Large ribosomal subunit protein bL32.